A 300-amino-acid polypeptide reads, in one-letter code: Transcriptional dual regulator GltC (300 aa).

Positions 1 to 58 (MELRQLRYFMEVAEREHVSEAADHLHVAQSAISRQIANLEEELNVTLFEREGRNIKLT) constitute an HTH lysR-type domain. A DNA-binding region (H-T-H motif) is located at residues 18–37 (VSEAADHLHVAQSAISRQIA).

The protein belongs to the LysR transcriptional regulatory family. In terms of assembly, interacts with gutamate dehydrogenase RocG.

With respect to regulation, activated by alpha-ketoglutarate and inhibited by glutamate and by RocG. In terms of biological role, positive regulator of glutamate biosynthesis (gltAB genes). Negatively regulates its own expression. The sequence is that of Transcriptional dual regulator GltC (gltC) from Bacillus subtilis (strain 168).